The chain runs to 237 residues: Purine nucleoside phosphorylase DeoD-type (237 aa).

His-4 serves as a coordination point for a purine D-ribonucleoside. Residues Gly-20, Arg-24, Arg-43, and 87–90 (RVGT) each bind phosphate. Residues 180–182 (EME) and 204–205 (SD) contribute to the a purine D-ribonucleoside site. The active-site Proton donor is the Asp-205.

The protein belongs to the PNP/UDP phosphorylase family. Homohexamer; trimer of homodimers.

The catalysed reaction is a purine D-ribonucleoside + phosphate = a purine nucleobase + alpha-D-ribose 1-phosphate. It carries out the reaction a purine 2'-deoxy-D-ribonucleoside + phosphate = a purine nucleobase + 2-deoxy-alpha-D-ribose 1-phosphate. Its function is as follows. Catalyzes the reversible phosphorolytic breakdown of the N-glycosidic bond in the beta-(deoxy)ribonucleoside molecules, with the formation of the corresponding free purine bases and pentose-1-phosphate. This is Purine nucleoside phosphorylase DeoD-type from Streptococcus suis (strain 98HAH33).